Consider the following 103-residue polypeptide: Large ribosomal subunit protein bL21 (103 aa).

This sequence belongs to the bacterial ribosomal protein bL21 family. As to quaternary structure, part of the 50S ribosomal subunit. Contacts protein L20.

Its function is as follows. This protein binds to 23S rRNA in the presence of protein L20. In Shewanella putrefaciens (strain CN-32 / ATCC BAA-453), this protein is Large ribosomal subunit protein bL21.